Here is a 450-residue protein sequence, read N- to C-terminus: Proline--tRNA ligase (450 aa).

The protein belongs to the class-II aminoacyl-tRNA synthetase family. ProS type 2 subfamily. As to quaternary structure, homodimer.

Its subcellular location is the cytoplasm. The enzyme catalyses tRNA(Pro) + L-proline + ATP = L-prolyl-tRNA(Pro) + AMP + diphosphate. Catalyzes the attachment of proline to tRNA(Pro) in a two-step reaction: proline is first activated by ATP to form Pro-AMP and then transferred to the acceptor end of tRNA(Pro). The chain is Proline--tRNA ligase from Paracoccus denitrificans (strain Pd 1222).